A 216-amino-acid polypeptide reads, in one-letter code: MQSGRVIMIVGNGDVPEGAAATIDAADLVIRFNDCRSVGKGGSRTDIIAVCNTGRPALSMLGGGRWKTSAAVRQARELWSVRSGARFAAMRAALAGTHPDLDDFCDDYTAGFESFARATARKHRVIAAETHDRLERDLARFAPSPYVAPSSGLVVIADIVSSFAAAGDDVVLAGFGHIGWQWHPFAAERRYVDALAAQGRLRRLHPFASSDLPQGA.

Functionally, involved in the expression of hydrogenase activity. May be a regulatory gene affecting the expression of the hydrogenase operon or could be involved in the process of nickel incorporation into the hydrogenase apoenzyme. This Rhizobium meliloti (strain 1021) (Ensifer meliloti) protein is Urease operon 23 kDa accessory protein.